Here is a 146-residue protein sequence, read N- to C-terminus: Hemoglobin subunit beta (146 aa).

Valine 1 is subject to N-acetylvaline. The Globin domain maps to 2–146 (QLSGEEKAAV…VANALAHKYH (145 aa)). Serine 44 is modified (phosphoserine). Residue lysine 59 is modified to N6-acetyllysine. Histidine 63 provides a ligand contact to heme b. The residue at position 82 (lysine 82) is an N6-acetyllysine. Histidine 92 is a heme b binding site. At cysteine 93 the chain carries S-nitrosocysteine. An N6-acetyllysine modification is found at lysine 144.

Belongs to the globin family. Heterotetramer of two alpha chains and two beta chains. Red blood cells.

Functionally, involved in oxygen transport from the lung to the various peripheral tissues. This Equus hemionus kulan (Turkmenian kulan) protein is Hemoglobin subunit beta (HBB).